The chain runs to 357 residues: Decorin (357 aa).

The signal sequence occupies residues 1 to 16 (MRLVLLFVLLLPVCLA). A propeptide spanning residues 17–30 (TRFHQKGLFDFMIE) is cleaved from the precursor. Serine 46 is a glycosylation site (O-linked (Xyl...) (glycosaminoglycan) serine). 2 disulfides stabilise this stretch: cysteine 52/cysteine 58 and cysteine 56/cysteine 65. LRR repeat units lie at residues 71-91 (ERVP…NNKI), 92-115 (TEIK…NNKI), 116-139 (SKIS…KNNL), 140-160 (KELP…ENEI), 161-184 (SKLR…TNPL), 185-210 (KSSG…DTNI), 211-231 (TSIP…GNKI), 232-255 (SKID…FNSI), 256-279 (SSVE…NNEL), 280-302 (VRVP…NNKI), 303-332 (ASIG…SNPV), and 333-357 (QYWE…GNYK). Asparagine 209 is a glycosylation site (N-linked (GlcNAc...) asparagine). Asparagine 260 carries N-linked (GlcNAc...) asparagine glycosylation. Cysteine 311 and cysteine 344 are disulfide-bonded.

The protein belongs to the small leucine-rich proteoglycan (SLRP) family. SLRP class I subfamily. As to quaternary structure, binds to type I and type II collagen, to fibronectin and TGF-beta. Forms a ternary complex with MFAP2 and ELN. In terms of processing, the attached glycosaminoglycan chain can be either chondroitin sulfate or dermatan sulfate depending upon the tissue of origin.

Its subcellular location is the secreted. The protein localises to the extracellular space. It localises to the extracellular matrix. Functionally, may affect the rate of fibrils formation. The protein is Decorin (DCN) of Gallus gallus (Chicken).